Here is a 969-residue protein sequence, read N- to C-terminus: Glycine dehydrogenase (decarboxylating) (969 aa).

Lys-716 is subject to N6-(pyridoxal phosphate)lysine.

The protein belongs to the GcvP family. As to quaternary structure, the glycine cleavage system is composed of four proteins: P, T, L and H. Requires pyridoxal 5'-phosphate as cofactor.

The catalysed reaction is N(6)-[(R)-lipoyl]-L-lysyl-[glycine-cleavage complex H protein] + glycine + H(+) = N(6)-[(R)-S(8)-aminomethyldihydrolipoyl]-L-lysyl-[glycine-cleavage complex H protein] + CO2. In terms of biological role, the glycine cleavage system catalyzes the degradation of glycine. The P protein binds the alpha-amino group of glycine through its pyridoxal phosphate cofactor; CO(2) is released and the remaining methylamine moiety is then transferred to the lipoamide cofactor of the H protein. In Shewanella woodyi (strain ATCC 51908 / MS32), this protein is Glycine dehydrogenase (decarboxylating).